Reading from the N-terminus, the 184-residue chain is Casparian strip membrane protein 1 (184 aa).

The Cytoplasmic portion of the chain corresponds to 1 to 24; it reads MKESGEHGETSKAPLNRGVSKGLS. A helical membrane pass occupies residues 25–45; sequence VLDLILRFIAIIGTLASAIAM. The Extracellular portion of the chain corresponds to 46-72; that stretch reads GTTNETLPFFTQFIRFKAQYSDLPTLT. N-linked (GlcNAc...) asparagine glycosylation is present at N49. The helical transmembrane segment at 73–93 threads the bilayer; the sequence is FFVVANSIVCAYLILSLPLSI. The Cytoplasmic segment spans residues 94–105; the sequence is VHIIRSRAKFSR. The chain crosses the membrane as a helical span at residues 106-126; that stretch reads LLLIFLDAVMLALVTAGASAA. Over 127–159 the chain is Extracellular; sequence AAIVYLAHKGNVRANWLAICQQFDSFCERISGS. Residues 160–180 traverse the membrane as a helical segment; that stretch reads LIGSFGAMVVLILLILLSAIA. Topologically, residues 181–184 are cytoplasmic; sequence LARR.

It belongs to the Casparian strip membrane proteins (CASP) family. As to quaternary structure, homodimer and heterodimers.

The protein localises to the cell membrane. Functionally, regulates membrane-cell wall junctions and localized cell wall deposition. Required for establishment of the Casparian strip membrane domain (CSD) and the subsequent formation of Casparian strips, a cell wall modification of the root endodermis that determines an apoplastic barrier between the intraorganismal apoplasm and the extraorganismal apoplasm and prevents lateral diffusion. In Panicum virgatum (Blackwell switchgrass), this protein is Casparian strip membrane protein 1.